The sequence spans 270 residues: 4-diphosphocytidyl-2-C-methyl-D-erythritol kinase (270 aa).

The active site involves Lys8. Residue 90–100 participates in ATP binding; it reads PIGAGLGGGSS. Asp132 is an active-site residue.

The protein belongs to the GHMP kinase family. IspE subfamily.

It catalyses the reaction 4-CDP-2-C-methyl-D-erythritol + ATP = 4-CDP-2-C-methyl-D-erythritol 2-phosphate + ADP + H(+). Its pathway is isoprenoid biosynthesis; isopentenyl diphosphate biosynthesis via DXP pathway; isopentenyl diphosphate from 1-deoxy-D-xylulose 5-phosphate: step 3/6. Functionally, catalyzes the phosphorylation of the position 2 hydroxy group of 4-diphosphocytidyl-2C-methyl-D-erythritol. This Cytophaga hutchinsonii (strain ATCC 33406 / DSM 1761 / CIP 103989 / NBRC 15051 / NCIMB 9469 / D465) protein is 4-diphosphocytidyl-2-C-methyl-D-erythritol kinase.